A 501-amino-acid chain; its full sequence is Lysine--tRNA ligase (501 aa).

Positions 402 and 409 each coordinate Mg(2+).

This sequence belongs to the class-II aminoacyl-tRNA synthetase family. Homodimer. The cofactor is Mg(2+).

Its subcellular location is the cytoplasm. The enzyme catalyses tRNA(Lys) + L-lysine + ATP = L-lysyl-tRNA(Lys) + AMP + diphosphate. This chain is Lysine--tRNA ligase, found in Helicobacter pylori (strain HPAG1).